Reading from the N-terminus, the 75-residue chain is Disintegrin CTF-II (75 aa).

The 75-residue stretch at 1-75 (ELLEEGEDCY…SDDCPRWNDL (75 aa)) folds into the Disintegrin domain. 6 disulfide bridges follow: Cys-9–Cys-24, Cys-11–Cys-19, Cys-18–Cys-41, Cys-32–Cys-38, Cys-37–Cys-62, and Cys-50–Cys-69. The short motif at 54–56 (RGD) is the Cell attachment site element.

This sequence belongs to the venom metalloproteinase (M12B) family. P-II subfamily. P-IIa sub-subfamily. As to quaternary structure, monomer (disintegrin). Expressed by the venom gland.

It is found in the secreted. Its function is as follows. Inhibits fibrinogen interaction with platelet receptors, and inhibits aggregation induced by ADP, thrombin, collagen and platelet-activating factor. Acts by binding to the alpha-IIb/beta-3 (ITGA2B/ITGB3) on the platelet surface. The sequence is that of Disintegrin CTF-II from Protobothrops flavoviridis (Habu).